Reading from the N-terminus, the 64-residue chain is Conotoxin reg3.16 (64 aa).

Residues 1 to 19 (MSKLGVFLTICLLLFPLTA) form the signal peptide. The propeptide occupies 20–49 (LQLDGDQPADKPAQRKLKILPKRKHWTRFT). Disulfide bonds link Cys-50-Cys-64, Cys-51-Cys-60, and Cys-56-Cys-63.

Belongs to the conotoxin M superfamily. As to expression, expressed by the venom duct.

Its subcellular location is the secreted. The chain is Conotoxin reg3.16 from Conus regius (Crown cone).